The sequence spans 171 residues: NADH-quinone oxidoreductase subunit B (171 aa).

Positions 34, 35, 99, and 128 each coordinate [4Fe-4S] cluster.

The protein belongs to the complex I 20 kDa subunit family. As to quaternary structure, NDH-1 is composed of 14 different subunits. Subunits NuoB, C, D, E, F, and G constitute the peripheral sector of the complex. The cofactor is [4Fe-4S] cluster.

The protein resides in the cell inner membrane. It carries out the reaction a quinone + NADH + 5 H(+)(in) = a quinol + NAD(+) + 4 H(+)(out). In terms of biological role, NDH-1 shuttles electrons from NADH, via FMN and iron-sulfur (Fe-S) centers, to quinones in the respiratory chain. The immediate electron acceptor for the enzyme in this species is believed to be ubiquinone. Couples the redox reaction to proton translocation (for every two electrons transferred, four hydrogen ions are translocated across the cytoplasmic membrane), and thus conserves the redox energy in a proton gradient. This chain is NADH-quinone oxidoreductase subunit B, found in Sulfurihydrogenibium sp. (strain YO3AOP1).